The primary structure comprises 114 residues: Large ribosomal subunit protein uL22 (114 aa).

Belongs to the universal ribosomal protein uL22 family. In terms of assembly, part of the 50S ribosomal subunit.

Its function is as follows. This protein binds specifically to 23S rRNA; its binding is stimulated by other ribosomal proteins, e.g. L4, L17, and L20. It is important during the early stages of 50S assembly. It makes multiple contacts with different domains of the 23S rRNA in the assembled 50S subunit and ribosome. The globular domain of the protein is located near the polypeptide exit tunnel on the outside of the subunit, while an extended beta-hairpin is found that lines the wall of the exit tunnel in the center of the 70S ribosome. This is Large ribosomal subunit protein uL22 from Streptococcus gordonii (strain Challis / ATCC 35105 / BCRC 15272 / CH1 / DL1 / V288).